The chain runs to 100 residues: MEHQQQQLRNLRDFLLVYNRMTELCFQRCVPSLHHRALDAEEEACLHSCAGKLIHSNHRLMAAYVHLMPALVQRRMADYEAASAVPGVPAEQPRDSPSGS.

Positions cysteine 25 to cysteine 49 match the Twin CX3C motif motif. 2 disulfides stabilise this stretch: cysteine 25/cysteine 49 and cysteine 29/cysteine 45.

This sequence belongs to the small Tim family. Component of the TIM22 complex, which core is composed of TIMM22, associated with TIMM10 (TIMM10A and/or TIMM10B), TIMM9, AGK and TIMM29.

The protein localises to the mitochondrion inner membrane. Component of the TIM22 complex, a complex that mediates the import and insertion of multi-pass transmembrane proteins into the mitochondrial inner membrane. The TIM22 complex forms a twin-pore translocase that uses the membrane potential as the external driving force. In the TIM22 complex, it may act as a docking point for the soluble 70 kDa complex that guides the target proteins in transit through the aqueous mitochondrial intermembrane space. This chain is Mitochondrial import inner membrane translocase subunit Tim10 B (Timm10b), found in Rattus norvegicus (Rat).